Reading from the N-terminus, the 90-residue chain is Small ribosomal subunit protein bS20 (90 aa).

It belongs to the bacterial ribosomal protein bS20 family.

In terms of biological role, binds directly to 16S ribosomal RNA. The polypeptide is Small ribosomal subunit protein bS20 (Acidiphilium cryptum (strain JF-5)).